Reading from the N-terminus, the 271-residue chain is Phosphatidylglycerol--prolipoprotein diacylglyceryl transferase (271 aa).

The next 7 membrane-spanning stretches (helical) occupy residues Ile21–Ala41, Leu60–Tyr80, Val95–Trp115, Phe124–Leu144, Ser176–Ile196, Gly203–Val223, and Leu230–Gly250. Arg143 contacts a 1,2-diacyl-sn-glycero-3-phospho-(1'-sn-glycerol).

Belongs to the Lgt family.

The protein resides in the cell inner membrane. It catalyses the reaction L-cysteinyl-[prolipoprotein] + a 1,2-diacyl-sn-glycero-3-phospho-(1'-sn-glycerol) = an S-1,2-diacyl-sn-glyceryl-L-cysteinyl-[prolipoprotein] + sn-glycerol 1-phosphate + H(+). The protein operates within protein modification; lipoprotein biosynthesis (diacylglyceryl transfer). Its function is as follows. Catalyzes the transfer of the diacylglyceryl group from phosphatidylglycerol to the sulfhydryl group of the N-terminal cysteine of a prolipoprotein, the first step in the formation of mature lipoproteins. The chain is Phosphatidylglycerol--prolipoprotein diacylglyceryl transferase from Vibrio vulnificus (strain CMCP6).